Reading from the N-terminus, the 665-residue chain is Long chain acyl-CoA synthetase 2 (665 aa).

228-239 contacts ATP; the sequence is IMYTSGTTGEPK. Residues 496–520 form a fatty acid-binding region; the sequence is DGWFHTGDIGEWQEDGSMKIIDRKK.

The protein belongs to the ATP-dependent AMP-binding enzyme family. The cofactor is Mg(2+). In terms of tissue distribution, expressed along the entire length of the stem, but expression was not entirely epidermal specific, with some expression found in internal cell layers as well. Was expressed in leave epidermal cells, flowers (sepals, petals, stamens, filaments and carpel), siliques and developing seeds. In roots, expression was detected in an internal cell layer, probably the endodermal layer.

It is found in the endoplasmic reticulum. It carries out the reaction a long-chain fatty acid + ATP + CoA = a long-chain fatty acyl-CoA + AMP + diphosphate. The protein operates within lipid metabolism; fatty acid metabolism. Functionally, activation of long-chain fatty acids for both synthesis of cellular lipids, and degradation via beta-oxidation. Acts in the cutin pathway. Preferentially uses palmitate, palmitoleate, oleate and linoleate. Required for repression of lateral root formation through its role in cutin biosynthesis and subsequent aerial tissues permeability. This chain is Long chain acyl-CoA synthetase 2 (LACS2), found in Arabidopsis thaliana (Mouse-ear cress).